A 323-amino-acid polypeptide reads, in one-letter code: Probable cell division protein WhiA (323 aa).

The segment at residues 275–309 is a DNA-binding region (H-T-H motif); sequence TLKELGEMLTTGQVSKSGINHRLRKLDQIAERLRS.

This sequence belongs to the WhiA family.

Functionally, involved in cell division and chromosome segregation. The protein is Probable cell division protein WhiA of Listeria welshimeri serovar 6b (strain ATCC 35897 / DSM 20650 / CCUG 15529 / CIP 8149 / NCTC 11857 / SLCC 5334 / V8).